The chain runs to 280 residues: MLMQIADFEIGLNNPLFLIAGPCVIESEALVMDVAGELKSITQQLDMPFIFKASFDKANRSSHLSYRGPGIEKGLTILEKVKKTLEVPIITDVHEDTPLQEVAAVVDVLQTPAFLCRQSNFIRSVAACGKPVNIKKGQFLAPWEMKQVVAKAWATGNKKIMVCERGYSFGYNNLISDMRALAILRETACPVIFDATHSVQLPGGHGTSSGGQREFVPVLARAATAAGIAGIFMETHPDPDRALSDGPNSWPLAKMQPLLETLKELDKVVKNAGFLEQSSE.

It belongs to the KdsA family.

It localises to the cytoplasm. The enzyme catalyses D-arabinose 5-phosphate + phosphoenolpyruvate + H2O = 3-deoxy-alpha-D-manno-2-octulosonate-8-phosphate + phosphate. It functions in the pathway carbohydrate biosynthesis; 3-deoxy-D-manno-octulosonate biosynthesis; 3-deoxy-D-manno-octulosonate from D-ribulose 5-phosphate: step 2/3. It participates in bacterial outer membrane biogenesis; lipopolysaccharide biosynthesis. The sequence is that of 2-dehydro-3-deoxyphosphooctonate aldolase from Coxiella burnetii (strain CbuK_Q154) (Coxiella burnetii (strain Q154)).